The following is a 180-amino-acid chain: MYKILAGVGSIVRTLFMVFTHGFRKRDTILYPEVPAEEIVPPRYRGRIILTRDPDGEERCVACNLCAVACPVGCISLQKAEKEDGRWYPEFFRINFSRCIFCGMCEEACPTTAIQLTPDFELGEYVRQDLVYEKENLLISGPGKYPDYNFYRVTGMAINGKEKGQAQKESAPIDVRSLLP.

4Fe-4S ferredoxin-type domains are found at residues 50–80 and 90–119; these read LTRD…LQKA and EFFR…LTPD. [4Fe-4S] cluster-binding residues include cysteine 60, cysteine 63, cysteine 66, cysteine 70, cysteine 99, cysteine 102, cysteine 105, and cysteine 109.

It belongs to the complex I 23 kDa subunit family. As to quaternary structure, NDH-1 is composed of 14 different subunits. Subunits NuoA, H, J, K, L, M, N constitute the membrane sector of the complex. [4Fe-4S] cluster is required as a cofactor.

It is found in the cell inner membrane. The catalysed reaction is a quinone + NADH + 5 H(+)(in) = a quinol + NAD(+) + 4 H(+)(out). Its function is as follows. NDH-1 shuttles electrons from NADH, via FMN and iron-sulfur (Fe-S) centers, to quinones in the respiratory chain. The immediate electron acceptor for the enzyme in this species is believed to be ubiquinone. Couples the redox reaction to proton translocation (for every two electrons transferred, four hydrogen ions are translocated across the cytoplasmic membrane), and thus conserves the redox energy in a proton gradient. In Acinetobacter baumannii (strain ACICU), this protein is NADH-quinone oxidoreductase subunit I.